The following is a 372-amino-acid chain: Cytochrome b (372 aa).

4 consecutive transmembrane segments (helical) span residues 25–45 (FGSM…FLAI), 69–90 (WMMQ…YIHI), 105–125 (WLSG…GYVL), and 170–190 (FFAL…IHIM). The heme b site is built by histidine 75 and histidine 89. Histidine 174 and histidine 188 together coordinate heme b. Histidine 193 is an a ubiquinone binding site. The next 4 helical transmembrane spans lie at 218 to 238 (HKDM…MSFN), 280 to 300 (LGGA…PFTH), 312 to 332 (LMQF…WAAT), and 339 to 358 (FTTI…IMNP).

It belongs to the cytochrome b family. As to quaternary structure, the cytochrome bc1 complex contains 3 respiratory subunits (MT-CYB, CYC1 and UQCRFS1), 2 core proteins (UQCRC1 and UQCRC2) and probably 6 low-molecular weight proteins. The cofactor is heme b.

Its subcellular location is the mitochondrion inner membrane. Component of the ubiquinol-cytochrome c reductase complex (complex III or cytochrome b-c1 complex) that is part of the mitochondrial respiratory chain. The b-c1 complex mediates electron transfer from ubiquinol to cytochrome c. Contributes to the generation of a proton gradient across the mitochondrial membrane that is then used for ATP synthesis. This Pantherophis bairdi (Baird's ratsnake) protein is Cytochrome b (MT-CYB).